The sequence spans 150 residues: uncharacterized protein (150 aa).

In terms of domain architecture, Flavodoxin-like spans 3 to 145 (VAILSGSVYG…DAEPWLAEFA (143 aa)).

The protein belongs to the flavodoxin family. MioC subfamily. FMN is required as a cofactor.

Probable electron transporter. This is an uncharacterized protein from Pseudomonas aeruginosa (strain ATCC 15692 / DSM 22644 / CIP 104116 / JCM 14847 / LMG 12228 / 1C / PRS 101 / PAO1).